Consider the following 494-residue polypeptide: Glutamate--tRNA ligase (494 aa).

Positions 9–19 (PSPTGDPHVGT) match the 'HIGH' region motif. A 'KMSKS' region motif is present at residues 250-254 (KLSKR). Residue lysine 253 participates in ATP binding.

Belongs to the class-I aminoacyl-tRNA synthetase family. Glutamate--tRNA ligase type 1 subfamily. Monomer.

The protein localises to the cytoplasm. It carries out the reaction tRNA(Glu) + L-glutamate + ATP = L-glutamyl-tRNA(Glu) + AMP + diphosphate. Catalyzes the attachment of glutamate to tRNA(Glu) in a two-step reaction: glutamate is first activated by ATP to form Glu-AMP and then transferred to the acceptor end of tRNA(Glu). This Alcanivorax borkumensis (strain ATCC 700651 / DSM 11573 / NCIMB 13689 / SK2) protein is Glutamate--tRNA ligase.